A 425-amino-acid polypeptide reads, in one-letter code: Glutamate-1-semialdehyde 2,1-aminomutase (425 aa).

At Lys265 the chain carries N6-(pyridoxal phosphate)lysine.

It belongs to the class-III pyridoxal-phosphate-dependent aminotransferase family. HemL subfamily. Homodimer. Pyridoxal 5'-phosphate is required as a cofactor.

It localises to the cytoplasm. It catalyses the reaction (S)-4-amino-5-oxopentanoate = 5-aminolevulinate. It functions in the pathway porphyrin-containing compound metabolism; protoporphyrin-IX biosynthesis; 5-aminolevulinate from L-glutamyl-tRNA(Glu): step 2/2. This chain is Glutamate-1-semialdehyde 2,1-aminomutase, found in Desulfatibacillum aliphaticivorans.